The sequence spans 130 residues: Large ribosomal subunit protein bL12 (130 aa).

Belongs to the bacterial ribosomal protein bL12 family. In terms of assembly, homodimer. Part of the ribosomal stalk of the 50S ribosomal subunit. Forms a multimeric L10(L12)X complex, where L10 forms an elongated spine to which 2 to 4 L12 dimers bind in a sequential fashion. Binds GTP-bound translation factors.

Its function is as follows. Forms part of the ribosomal stalk which helps the ribosome interact with GTP-bound translation factors. Is thus essential for accurate translation. The sequence is that of Large ribosomal subunit protein bL12 from Mycobacterium bovis (strain ATCC BAA-935 / AF2122/97).